A 136-amino-acid polypeptide reads, in one-letter code: Small ribosomal subunit protein uS9 (136 aa).

The protein belongs to the universal ribosomal protein uS9 family.

The protein is Small ribosomal subunit protein uS9 of Borrelia garinii subsp. bavariensis (strain ATCC BAA-2496 / DSM 23469 / PBi) (Borreliella bavariensis).